Consider the following 391-residue polypeptide: Chorismate synthase (391 aa).

R39 and R45 together coordinate NADP(+). FMN contacts are provided by residues 133–135 (RAS), 254–255 (QA), G299, 314–318 (KPIAT), and R340.

Belongs to the chorismate synthase family. As to quaternary structure, homotetramer. It depends on FMNH2 as a cofactor.

It carries out the reaction 5-O-(1-carboxyvinyl)-3-phosphoshikimate = chorismate + phosphate. Its pathway is metabolic intermediate biosynthesis; chorismate biosynthesis; chorismate from D-erythrose 4-phosphate and phosphoenolpyruvate: step 7/7. Catalyzes the anti-1,4-elimination of the C-3 phosphate and the C-6 proR hydrogen from 5-enolpyruvylshikimate-3-phosphate (EPSP) to yield chorismate, which is the branch point compound that serves as the starting substrate for the three terminal pathways of aromatic amino acid biosynthesis. This reaction introduces a second double bond into the aromatic ring system. This Symbiobacterium thermophilum (strain DSM 24528 / JCM 14929 / IAM 14863 / T) protein is Chorismate synthase.